Here is a 144-residue protein sequence, read N- to C-terminus: Large ribosomal subunit protein uL16 (144 aa).

Belongs to the universal ribosomal protein uL16 family. Part of the 50S ribosomal subunit.

In terms of biological role, binds 23S rRNA and is also seen to make contacts with the A and possibly P site tRNAs. The chain is Large ribosomal subunit protein uL16 from Lacticaseibacillus paracasei (strain ATCC 334 / BCRC 17002 / CCUG 31169 / CIP 107868 / KCTC 3260 / NRRL B-441) (Lactobacillus paracasei).